A 170-amino-acid chain; its full sequence is Lipoprotein signal peptidase (170 aa).

3 helical membrane-spanning segments follow: residues 9–29 (FNIF…KYLV), 72–92 (IFFL…SLKE), and 94–114 (NCIA…NVID). Residues Asp124 and Asp146 contribute to the active site. Residues 143–163 (NFADSYVVIGMILFLVYDFFI) traverse the membrane as a helical segment.

The protein belongs to the peptidase A8 family.

Its subcellular location is the cell inner membrane. It catalyses the reaction Release of signal peptides from bacterial membrane prolipoproteins. Hydrolyzes -Xaa-Yaa-Zaa-|-(S,diacylglyceryl)Cys-, in which Xaa is hydrophobic (preferably Leu), and Yaa (Ala or Ser) and Zaa (Gly or Ala) have small, neutral side chains.. It participates in protein modification; lipoprotein biosynthesis (signal peptide cleavage). In terms of biological role, this protein specifically catalyzes the removal of signal peptides from prolipoproteins. The protein is Lipoprotein signal peptidase of Borreliella burgdorferi (strain ATCC 35210 / DSM 4680 / CIP 102532 / B31) (Borrelia burgdorferi).